The primary structure comprises 299 residues: Tetrahydromethanopterin S-methyltransferase subunit E (299 aa).

The next 6 membrane-spanning stretches (helical) occupy residues Ala-57–Leu-79, Gly-95–Gly-115, Ile-133–Leu-153, Leu-158–Ile-178, Gly-237–Ile-257, and Val-262–Ile-282.

This sequence belongs to the MtrE family. The complex is composed of 8 subunits; MtrA, MtrB, MtrC, MtrD, MtrE, MtrF, MtrG and MtrH.

It is found in the cell membrane. It catalyses the reaction 5-methyl-5,6,7,8-tetrahydromethanopterin + coenzyme M + 2 Na(+)(in) = 5,6,7,8-tetrahydromethanopterin + methyl-coenzyme M + 2 Na(+)(out). Its pathway is one-carbon metabolism; methanogenesis from CO(2); methyl-coenzyme M from 5,10-methylene-5,6,7,8-tetrahydromethanopterin: step 2/2. Part of a complex that catalyzes the formation of methyl-coenzyme M and tetrahydromethanopterin from coenzyme M and methyl-tetrahydromethanopterin. This is an energy-conserving, sodium-ion translocating step. This is Tetrahydromethanopterin S-methyltransferase subunit E from Methanococcus maripaludis (strain C5 / ATCC BAA-1333).